Reading from the N-terminus, the 570-residue chain is Repressible high-affinity phosphate permease (570 aa).

The Cytoplasmic segment spans residues 1–61; that stretch reads MSTPQKTAGG…AVAGVGFFTD (61 aa). The helical transmembrane segment at 62–82 threads the bilayer; sequence SYDIFTVSLLTLMLGIVYFPG. Residues 83-95 lie on the Extracellular side of the membrane; it reads EGKMPTTSDTAIK. A helical membrane pass occupies residues 96-116; the sequence is LATSAGTVIGQVGFGAAADVF. At 117–120 the chain is on the cytoplasmic side; the sequence is GRKS. The chain crosses the membrane as a helical span at residues 121-141; sequence MYGLELLFIIFATLAQALASG. The Extracellular segment spans residues 142 to 143; the sequence is SP. Residues 144 to 164 traverse the membrane as a helical segment; it reads SINIIGIIIFWRVLMGVGIGG. Residues 165 to 186 are Cytoplasmic-facing; sequence DYPLSSIITSEFATTKWRGAMM. A helical transmembrane segment spans residues 187-207; it reads GAVFAMQGLGQLAAAFVMLFV. Topologically, residues 208-237 are extracellular; that stretch reads TLGFKKSLEAAPTLASCTGDCAVAVDKMWR. A helical transmembrane segment spans residues 238–258; it reads TVIGVGAVPGCIALYYRLTIP. At 259–325 the chain is on the cytoplasmic side; that stretch reads ETPRYTFDVK…FFRHYSKRKN (67 aa). A helical transmembrane segment spans residues 326–346; the sequence is AMLLAGTALSWCFLDIAYYGV. Over 347 to 374 the chain is Extracellular; it reads SLNNATILNVIGYSTTGAKNTYEILYNT. Residues 375-395 form a helical membrane-spanning segment; sequence AVGNLIIVLAGAVPGYWVTVF. At 396–403 the chain is on the cytoplasmic side; sequence TVDTVGRK. The helical transmembrane segment at 404 to 424 threads the bilayer; the sequence is PIQFMGFGILTILFVVMGFAY. The Extracellular segment spans residues 425-433; the sequence is KHLSPHALL. A helical membrane pass occupies residues 434 to 454; sequence AIFVLAQFFFNFGPNATTFIV. Residues 455-468 lie on the Cytoplasmic side of the membrane; sequence PGEVFPTRYRSTSH. A helical membrane pass occupies residues 469-489; sequence GLSAAMGKIGSIIGQGAIAPL. The Extracellular portion of the chain corresponds to 490 to 505; the sequence is RTRGAVKGGNPNPWMN. A helical transmembrane segment spans residues 506–526; the sequence is HVLEIYALFMLLGVGTTFLIP. The Cytoplasmic segment spans residues 527-570; that stretch reads ETKRKTLEELSGEFDMSGEEEAQRDTTLTEHKTEAPTSSAAVNA. Over residues 537–546 the composition is skewed to acidic residues; it reads SGEFDMSGEE. Positions 537–570 are disordered; sequence SGEFDMSGEEEAQRDTTLTEHKTEAPTSSAAVNA. The span at 547-560 shows a compositional bias: basic and acidic residues; it reads EAQRDTTLTEHKTE. The segment covering 561 to 570 has biased composition (polar residues); the sequence is APTSSAAVNA.

Belongs to the major facilitator superfamily. Sugar transporter (TC 2.A.1.1) family.

The protein localises to the cell membrane. Phosphate transport activity is competitively inhibited by arsenate. In terms of biological role, high-affinity transporter for external inorganic phosphate. Acts probably as a H(+)-phosphate symporter. The polypeptide is Repressible high-affinity phosphate permease (Neurospora crassa (strain ATCC 24698 / 74-OR23-1A / CBS 708.71 / DSM 1257 / FGSC 987)).